A 123-amino-acid chain; its full sequence is Probable cytochrome c 2.2 (123 aa).

Residues 1-21 form a disordered region; it reads MGKKKSDTASGGAIPEGDNEK. Residues cysteine 30, cysteine 33, histidine 34, and methionine 95 each contribute to the heme c site.

It belongs to the cytochrome c family. Post-translationally, binds 1 heme c group covalently per subunit.

It localises to the mitochondrion intermembrane space. Functionally, electron carrier protein. The oxidized form of the cytochrome c heme group can accept an electron from the heme group of the cytochrome c1 subunit of cytochrome reductase. Cytochrome c then transfers this electron to the cytochrome oxidase complex, the final protein carrier in the mitochondrial electron-transport chain. This chain is Probable cytochrome c 2.2 (cyc-2.2), found in Caenorhabditis elegans.